Here is a 115-residue protein sequence, read N- to C-terminus: Thrombospondin type-1 domain-containing protein 8 (115 aa).

The first 21 residues, 1 to 21, serve as a signal peptide directing secretion; that stretch reads MARTPGALLLAPLLLLQLATP. The TSP type-1 domain maps to 53 to 104; sequence DSILGPWGKWRCLCDLGKQERSREVVGTAPGPVFMDPEKLIQLRPCRQRDCP.

The polypeptide is Thrombospondin type-1 domain-containing protein 8 (Homo sapiens (Human)).